Reading from the N-terminus, the 453-residue chain is MSWSILELVRNNPDKLKEYIKRRFIDVSLVDRAVELDKKWRQTLQEVEKLRHEHNVISSSIPKAKPEERQELIKKAKELLKALEEKEKELDNIENERDNILMQLPNIVDDSAPIGPDETYSVPIRFWGKFKVYEKDEAEFLSQLKGNRVDYEIIHWKPVGHADMLENVLKLGDTKKAAEVSGARFYYLFDDIVWLDIALLNYAIDTMTSKGYTLVLPPYMLRGEVIKSVIDLDTFKDAIYKIENEDLYLIATAEHPIAALYFKEEIPKEKLPLKYVGISPAFRKEAGAANKDLKGIFRVHQFHKVEQFIFSSPEDSWKLHEELIRNAEEIFQGLGLPYRVINIATGDLGACAAKKYDLEVWMPAQAKFREMVSCSNCLDWQAYRMRIRYVEKGGKKGYVHTLNSTAIASTRTITAILENYQREDGVVEIPKVLKKYLEPFSRAPKDYIYPRKE.

252 to 254 (TAE) is a binding site for L-serine. ATP contacts are provided by residues 283–285 (RKE) and Val-299. Glu-306 lines the L-serine pocket. 370 to 373 (EMVS) contributes to the ATP binding site. Thr-405 lines the L-serine pocket.

The protein belongs to the class-II aminoacyl-tRNA synthetase family. Type-1 seryl-tRNA synthetase subfamily. In terms of assembly, homodimer. The tRNA molecule binds across the dimer.

The protein resides in the cytoplasm. It carries out the reaction tRNA(Ser) + L-serine + ATP = L-seryl-tRNA(Ser) + AMP + diphosphate + H(+). The catalysed reaction is tRNA(Sec) + L-serine + ATP = L-seryl-tRNA(Sec) + AMP + diphosphate + H(+). It functions in the pathway aminoacyl-tRNA biosynthesis; selenocysteinyl-tRNA(Sec) biosynthesis; L-seryl-tRNA(Sec) from L-serine and tRNA(Sec): step 1/1. Catalyzes the attachment of serine to tRNA(Ser). Is also able to aminoacylate tRNA(Sec) with serine, to form the misacylated tRNA L-seryl-tRNA(Sec), which will be further converted into selenocysteinyl-tRNA(Sec). In Sulfurisphaera tokodaii (strain DSM 16993 / JCM 10545 / NBRC 100140 / 7) (Sulfolobus tokodaii), this protein is Serine--tRNA ligase.